The following is a 257-amino-acid chain: Imidazole glycerol phosphate synthase subunit HisF (257 aa).

Active-site residues include Asp11 and Asp130.

Belongs to the HisA/HisF family. In terms of assembly, heterodimer of HisH and HisF.

The protein localises to the cytoplasm. It catalyses the reaction 5-[(5-phospho-1-deoxy-D-ribulos-1-ylimino)methylamino]-1-(5-phospho-beta-D-ribosyl)imidazole-4-carboxamide + L-glutamine = D-erythro-1-(imidazol-4-yl)glycerol 3-phosphate + 5-amino-1-(5-phospho-beta-D-ribosyl)imidazole-4-carboxamide + L-glutamate + H(+). It functions in the pathway amino-acid biosynthesis; L-histidine biosynthesis; L-histidine from 5-phospho-alpha-D-ribose 1-diphosphate: step 5/9. Its function is as follows. IGPS catalyzes the conversion of PRFAR and glutamine to IGP, AICAR and glutamate. The HisF subunit catalyzes the cyclization activity that produces IGP and AICAR from PRFAR using the ammonia provided by the HisH subunit. This Pseudoalteromonas atlantica (strain T6c / ATCC BAA-1087) protein is Imidazole glycerol phosphate synthase subunit HisF.